The primary structure comprises 673 residues: MVELIKVPKIEQEEGNADSHGKEKADVVHEEKTEKVKRRRKRVSDPQRKKACVDCTKRCIRIHGMASSSSEKARPTPTLPSFFKIMVGYFSENMDIPLPFARTITDMTGSNVYLEDAYGLRWRVRLYLHDDVLSFGHGWKNFVLDHDISVGEFLVFRQIARSVFTVQIFAISACERIHLCERNKRQSRKRKPGRKTGYPANNQMVKVSSKDVVKRRKKQRTDEQIYDLDPRQHDMPVRVCIDSGSEQRCSESSVKELDAAPDKSHAVVQVPATECNADPSYNAAGMKTIKNLEAIGASSSTKDVTWDANKSEDYPSFSYPESSNVMTADKESERSHQDRPMQLYCELGLEDGNAETENCENSNVLENAELRTPLAMMDLNEVGIDDIFLSADIYEFDSDFCSPEAFSVDVNTEGLVSNGRTPGDCFGVPETSRCLENKQMTDVPRTSTDDGSIAVHGIDINALPSNTYPDIGQGNTYPDIDAAPDDCKKDKDVLHSECNKVAQKAHSSVKQDITKDGPRQIAAEIMSSDPKTCELTYVRKNSVQPGISSVSQWNNSKGQESGGTKSCVVLAVAANSKKFCITIPPPDQTWLELPRRLPVLPRTKKQARKILILKDPSMRLWPVLYQCTPKFNGFIAGWADISRENNLREGDTCEFELCSNSELSFQVLVPNLQ.

Residues 1-34 (MVELIKVPKIEQEEGNADSHGKEKADVVHEEKTE) show a composition bias toward basic and acidic residues. Positions 1 to 44 (MVELIKVPKIEQEEGNADSHGKEKADVVHEEKTEKVKRRRKRVS) are disordered. The segment at residues 79–172 (LPSFFKIMVG…VFTVQIFAIS (94 aa)) is a DNA-binding region (TF-B3 1). The tract at residues 315–337 (PSFSYPESSNVMTADKESERSHQ) is disordered. The span at 328 to 337 (ADKESERSHQ) shows a compositional bias: basic and acidic residues. Residues 576–671 (SKKFCITIPP…ELSFQVLVPN (96 aa)) constitute a DNA-binding region (TF-B3 2).

Its subcellular location is the nucleus. This Oryza sativa subsp. japonica (Rice) protein is B3 domain-containing protein Os01g0905400.